The sequence spans 1040 residues: DNA mismatch repair protein MutS (1040 aa).

Positions M1 to N10 are enriched in polar residues. 2 disordered regions span residues M1–V22 and A130–T157. The span at S11 to V22 shows a compositional bias: low complexity. Residues A130–P143 are compositionally biased toward polar residues. G759–S766 is a binding site for ATP.

The protein belongs to the DNA mismatch repair MutS family.

This protein is involved in the repair of mismatches in DNA. It is possible that it carries out the mismatch recognition step. This protein has a weak ATPase activity. This Psychrobacter cryohalolentis (strain ATCC BAA-1226 / DSM 17306 / VKM B-2378 / K5) protein is DNA mismatch repair protein MutS.